A 188-amino-acid chain; its full sequence is MTNPDNMKPVEATDVESAAEKTSEPTPASGTSTITQRWKREDLIKKASPITRGICLLFSLIAFLIMVSNKHGYGRNFNDYEEYRYVLAISIISTLYTAWQTFAHFSKREIFDRRTSILVDFSGDQIVAYLLISAASSAIPLTNIFREGQDNIFTDSAASAISMAIFAFIALALSALFSGYKLSTHSFI.

Positions 1 to 34 (MTNPDNMKPVEATDVESAAEKTSEPTPASGTSTI) are disordered. Residues 1 to 46 (MTNPDNMKPVEATDVESAAEKTSEPTPASGTSTITQRWKREDLIKK) are Cytoplasmic-facing. Positions 24-34 (EPTPASGTSTI) are enriched in polar residues. The chain crosses the membrane as a helical span at residues 47–67 (ASPITRGICLLFSLIAFLIMV). At 68 to 84 (SNKHGYGRNFNDYEEYR) the chain is on the extracellular side. A helical membrane pass occupies residues 85–105 (YVLAISIISTLYTAWQTFAHF). At 106–124 (SKREIFDRRTSILVDFSGD) the chain is on the cytoplasmic side. The helical transmembrane segment at 125-145 (QIVAYLLISAASSAIPLTNIF) threads the bilayer. The Extracellular portion of the chain corresponds to 146–156 (REGQDNIFTDS). A helical membrane pass occupies residues 157–177 (AASAISMAIFAFIALALSALF). Residues 178-188 (SGYKLSTHSFI) lie on the Cytoplasmic side of the membrane.

It belongs to the Casparian strip membrane proteins (CASP) family. Homodimer and heterodimers.

The protein resides in the cell membrane. In Arabidopsis thaliana (Mouse-ear cress), this protein is CASP-like protein 4B1.